We begin with the raw amino-acid sequence, 86 residues long: Large ribosomal subunit protein uL23 (86 aa).

It belongs to the universal ribosomal protein uL23 family. In terms of assembly, part of the 50S ribosomal subunit. Contacts protein L29.

Its function is as follows. Binds to 23S rRNA. One of the proteins that surrounds the polypeptide exit tunnel on the outside of the ribosome. In Methanobrevibacter smithii (strain ATCC 35061 / DSM 861 / OCM 144 / PS), this protein is Large ribosomal subunit protein uL23.